The sequence spans 631 residues: ATP-dependent RNA helicase mrh4, mitochondrial (631 aa).

A mitochondrion-targeting transit peptide spans 1–39 (MYPLGRVSLPVRSPVCLFCQNRTSSLLPSAYVWQSARTM). Residues 55–111 (PNVAKTSLKKKRNDTDRFGPFAGMNQTEARIRDDPRSRSPASLKRSKAPSDESGRKD) are disordered. Over residues 102–111 (APSDESGRKD) the composition is skewed to basic and acidic residues. Positions 143–176 (TSFDQFPLLPVVRHSIFSQALPGLHDVTPTPIQR) match the Q motif motif. Residues 181-200 (RLLDDTNKDKKPKKRAEGEP) form a disordered region. The 213-residue stretch at 196–408 (AEGEPEYDQY…RKKYPDIQRL (213 aa)) folds into the Helicase ATP-binding domain. 209–216 (AETGSGKT) provides a ligand contact to ATP. The short motif at 355–358 (DEAD) is the DEAD box element. Residues 442-631 (DVIWSIGKAG…EGMFRGQALI (190 aa)) enclose the Helicase C-terminal domain.

This sequence belongs to the DEAD box helicase family. MRH4 subfamily.

The protein localises to the mitochondrion. It catalyses the reaction ATP + H2O = ADP + phosphate + H(+). Functionally, ATP-binding RNA helicase involved in mitochondrial RNA metabolism. Required for maintenance of mitochondrial DNA. In Aspergillus terreus (strain NIH 2624 / FGSC A1156), this protein is ATP-dependent RNA helicase mrh4, mitochondrial (mrh4).